Consider the following 257-residue polypeptide: Probable enoyl-CoA hydratase echA8 (257 aa).

The protein belongs to the enoyl-CoA hydratase/isomerase family.

It catalyses the reaction a (3S)-3-hydroxyacyl-CoA = a (2E)-enoyl-CoA + H2O. The enzyme catalyses a 4-saturated-(3S)-3-hydroxyacyl-CoA = a (3E)-enoyl-CoA + H2O. In terms of biological role, could possibly oxidize fatty acids using specific components. The protein is Probable enoyl-CoA hydratase echA8 (echA8) of Mycobacterium leprae (strain TN).